The sequence spans 494 residues: Xylan glycosyltransferase MUCI21 (494 aa).

The Cytoplasmic portion of the chain corresponds to 1-40; the sequence is MRQNLKKVAQIKVDESKKLFPYVFRVKTSCGNCAKRSKPK. Residues 41–61 traverse the membrane as a helical; Signal-anchor for type II membrane protein segment; that stretch reads LIYLLIFSLISSCFVFAPQLL. Residues 62 to 494 lie on the Lumenal side of the membrane; that stretch reads CFPYPSALFL…LIDAYAKSIR (433 aa). N-linked (GlcNAc...) asparagine glycosylation is present at Asn375.

Belongs to the glycosyltransferase 61 family.

It localises to the golgi apparatus membrane. Glycosyletransferase required for the proper composition and structural properties of released seed coat mucilage. Required for the production of highly branched xylan polymers in seed coat mucilage. Facilitates the addition of xylose residues directly to the xylan backbone. Xylan with xylose side chains seems to be necessary for pectin attachment to the seed surface. Essential for xylan synthesis in seed coat epidermal (SCE) cells. The polypeptide is Xylan glycosyltransferase MUCI21 (Arabidopsis thaliana (Mouse-ear cress)).